A 208-amino-acid polypeptide reads, in one-letter code: Imidazole glycerol phosphate synthase subunit HisH (208 aa).

A Glutamine amidotransferase type-1 domain is found at 1–206 (MIVIIDYDTG…KEVTESCKSS (206 aa)). Catalysis depends on cysteine 79, which acts as the Nucleophile. Residues histidine 181 and glutamate 183 contribute to the active site.

As to quaternary structure, heterodimer of HisH and HisF.

The protein localises to the cytoplasm. It catalyses the reaction 5-[(5-phospho-1-deoxy-D-ribulos-1-ylimino)methylamino]-1-(5-phospho-beta-D-ribosyl)imidazole-4-carboxamide + L-glutamine = D-erythro-1-(imidazol-4-yl)glycerol 3-phosphate + 5-amino-1-(5-phospho-beta-D-ribosyl)imidazole-4-carboxamide + L-glutamate + H(+). The enzyme catalyses L-glutamine + H2O = L-glutamate + NH4(+). It functions in the pathway amino-acid biosynthesis; L-histidine biosynthesis; L-histidine from 5-phospho-alpha-D-ribose 1-diphosphate: step 5/9. IGPS catalyzes the conversion of PRFAR and glutamine to IGP, AICAR and glutamate. The HisH subunit catalyzes the hydrolysis of glutamine to glutamate and ammonia as part of the synthesis of IGP and AICAR. The resulting ammonia molecule is channeled to the active site of HisF. The polypeptide is Imidazole glycerol phosphate synthase subunit HisH (Listeria innocua serovar 6a (strain ATCC BAA-680 / CLIP 11262)).